A 364-amino-acid chain; its full sequence is Fructose-1,6-bisphosphatase class 1 3 (364 aa).

Residues Glu-101, Asp-123, Leu-125, and Asp-126 each coordinate Mg(2+). Substrate contacts are provided by residues 126–129 (DGSS) and Asn-218. Mg(2+) is bound at residue Glu-290.

This sequence belongs to the FBPase class 1 family. Homotetramer. It depends on Mg(2+) as a cofactor.

It is found in the cytoplasm. The enzyme catalyses beta-D-fructose 1,6-bisphosphate + H2O = beta-D-fructose 6-phosphate + phosphate. It functions in the pathway carbohydrate biosynthesis; gluconeogenesis. In Cupriavidus necator (strain ATCC 17699 / DSM 428 / KCTC 22496 / NCIMB 10442 / H16 / Stanier 337) (Ralstonia eutropha), this protein is Fructose-1,6-bisphosphatase class 1 3.